The sequence spans 1034 residues: Sodium bicarbonate cotransporter 3 (1034 aa).

Disordered regions lie at residues 1–31 (MEAD…KTSS) and 53–99 (HVPF…SQRV). Residues 1-476 (MEADGAGEQM…DFKDALSLQC (476 aa)) lie on the Extracellular side of the membrane. Residues S57, S60, S89, and S155 each carry the phosphoserine modification. Basic residues predominate over residues 60 to 77 (SRRRHKHRGHKHHHRRRK). Over residues 78 to 90 (DKDSDKEDGRESP) the composition is skewed to basic and acidic residues. N-linked (GlcNAc...) asparagine glycosylation is present at N176. 6 positions are modified to phosphoserine: S238, S250, S260, M263, S268, and S271. Residues 250–260 (SAPGNLDNSKS) are compositionally biased toward polar residues. A disordered region spans residues 250-276 (SAPGNLDNSKSGEMKGNGSGGSRENST). An N-linked (GlcNAc...) asparagine glycan is attached at N274. S275 and S424 each carry phosphoserine. Residues 477–497 (LASILFLYCACMSPVITFGGL) form a helical membrane-spanning segment. At 498-505 (LGEATEGR) the chain is on the cytoplasmic side. A helical transmembrane segment spans residues 506 to 526 (ISAIESLFGASLTGIAYSLFA). At 527–563 (GQPLTILGSTGPVLVFEKILFKFCRDYHLSYLSLRTS) the chain is on the extracellular side. The helical transmembrane segment at 564-584 (IGLWTSFLCIVLVATDASSLV) threads the bilayer. Topologically, residues 585–593 (CYITRFTEE) are cytoplasmic. A helical transmembrane segment spans residues 594–614 (AFAALICIIFIYEALEKLFHL). At 615-685 (GEIYAFNMHN…MFVGSACGPH (71 aa)) the chain is on the extracellular side. A disulfide bond links C634 and C636. N644, N654, and N664 each carry an N-linked (GlcNAc...) asparagine glycan. Residues C670 and C682 are joined by a disulfide bond. Residues 686–706 (GPYVPDVLFWCVVLFFTTFFL) form a helical membrane-spanning segment. At 707–729 (SSFLKQFKTKGYFPTKVRSTISD) the chain is on the cytoplasmic side. Residues 730-750 (FAVFLTIVIMVAIDYLVGIPS) traverse the membrane as a helical segment. At 751–776 (PKLHVPEKFEPTDPSRGWIISPLGDN) the chain is on the extracellular side. The chain crosses the membrane as a helical span at residues 777–797 (PWWTLLIAAVPALLCTILIFM). Topologically, residues 798 to 812 (DQQITAVIINRKEHK) are cytoplasmic. A helical transmembrane segment spans residues 813–833 (LKFIPMPVLYGVFLYMGVSSL). The interval 815–915 (FIPMPVLYGV…MDLCFTKREL (101 aa)) is essential for cell membrane localization and transport activity. The Extracellular portion of the chain corresponds to 834–876 (KGIQFFDRIKLFGMPAKHQPDLIYLRYVPLWKVHVFTVVQLTC). Residues 877–897 (LVLLWVIKASAAAVVFPMMVL) form a helical membrane-spanning segment. The Cytoplasmic segment spans residues 898–1034 (ALVFVRKLMD…KKYMDAETSL (137 aa)). Residues 918-920 (LDD) are CA2-binding. The segment at 926–946 (KKKKEDDKKKKEKEEAERMLQ) is disordered. Position 951 is a phosphothreonine (T951). 2 positions are modified to phosphoserine: S960 and S1033. Positions 1031-1034 (ETSL) match the PDZ-binding motif.

This sequence belongs to the anion exchanger (TC 2.A.31) family. In terms of assembly, forms a complex with ATP6V1B1 and NHERF1/EBP50. Interacts in a pH dependent-manner with CA2/carbonic anhydrase 2. Interacts with CFTR through NHERF1/EBP50. Interacts with USH1C. As to expression, expressed in the spiral ligament throughout the cochlea and in photoreceptors of the outer plexiform layer of the retina (at protein level).

Its subcellular location is the basolateral cell membrane. It localises to the apical cell membrane. The protein localises to the cell projection. It is found in the stereocilium. The protein resides in the cell membrane. The catalysed reaction is hydrogencarbonate(in) + Na(+)(in) = hydrogencarbonate(out) + Na(+)(out). Its activity is regulated as follows. Activity is inhibited by 4,4'-di-isothiocyanatostilbene-2,2'-disulfonic acid (DIDS - an inhibitor of several anion channels and transporters). Electroneutral sodium- and bicarbonate-dependent cotransporter with a Na(+):HCO3(-) 1:1 stoichiometry. Mediates the sodium-dependent bicarbonate transport important for pH recovery after acid load as well as for regulation of steady-state pH in the duodenum and vascular smooth muscle cells. Plays a key role in macrophage acidification, mediating bicarbonate import into the cytoplasm which is crucial for net acid extrusion and maintenance of cytoplasmic pH during phagocytosis. Provides cellular bicarbonate for de novo purine and pyrimidine synthesis and is a key mediator of de novo nucleotide synthesis downstream of mTORC1 signaling in proliferating cells. May be involved in maintaining locomotor activity, exploratory behavior, and hearing. The sequence is that of Sodium bicarbonate cotransporter 3 (Slc4a7) from Mus musculus (Mouse).